Reading from the N-terminus, the 162-residue chain is MNTKFPITAKGFKKLEHELKHLKHVERKKISEDIAEAREHGDLSENAEYEAAREKQAFIEGRIKELEDMTARAEIIDICKLSGDNIKFGATVTLIDDDTEEEVTYVIVGEYEADITKKRVSIASPIAKALIGKSVGDFVEVITPKGLKSYEVVTVEYKELDL.

Residues 45 to 74 (ENAEYEAAREKQAFIEGRIKELEDMTARAE) are a coiled coil.

It belongs to the GreA/GreB family.

Necessary for efficient RNA polymerase transcription elongation past template-encoded arresting sites. The arresting sites in DNA have the property of trapping a certain fraction of elongating RNA polymerases that pass through, resulting in locked ternary complexes. Cleavage of the nascent transcript by cleavage factors such as GreA or GreB allows the resumption of elongation from the new 3'terminus. GreA releases sequences of 2 to 3 nucleotides. The chain is Transcription elongation factor GreA from Rickettsia typhi (strain ATCC VR-144 / Wilmington).